A 131-amino-acid polypeptide reads, in one-letter code: Profilin-3 (131 aa).

The protein belongs to the profilin family. Occurs in many kinds of cells as a complex with monomeric actin in a 1:1 ratio.

Its subcellular location is the cytoplasm. It is found in the cytoskeleton. In terms of biological role, binds to actin and affects the structure of the cytoskeleton. At high concentrations, profilin prevents the polymerization of actin, whereas it enhances it at low concentrations. By binding to PIP2, it inhibits the formation of IP3 and DG. The chain is Profilin-3 from Malus domestica (Apple).